A 154-amino-acid polypeptide reads, in one-letter code: uncharacterized protein (154 aa).

12–19 (GSSDVGKT) is a GTP binding site. A G domain is found at 17–112 (GKTTLMENLI…KIPYGIFINK (96 aa)).

It to M.thermoautotrophicum MTH765.

This is an uncharacterized protein from Methanocaldococcus jannaschii (strain ATCC 43067 / DSM 2661 / JAL-1 / JCM 10045 / NBRC 100440) (Methanococcus jannaschii).